The following is a 167-amino-acid chain: Endoribonuclease YbeY (167 aa).

Residues His-132, His-136, and His-142 each coordinate Zn(2+).

It belongs to the endoribonuclease YbeY family. Zn(2+) is required as a cofactor.

The protein resides in the cytoplasm. Its function is as follows. Single strand-specific metallo-endoribonuclease involved in late-stage 70S ribosome quality control and in maturation of the 3' terminus of the 16S rRNA. The polypeptide is Endoribonuclease YbeY (Clostridium beijerinckii (strain ATCC 51743 / NCIMB 8052) (Clostridium acetobutylicum)).